We begin with the raw amino-acid sequence, 186 residues long: Large ribosomal subunit protein uL5 (186 aa).

The protein belongs to the universal ribosomal protein uL5 family. As to quaternary structure, part of the 50S ribosomal subunit; part of the 5S rRNA/L5/L18/L25 subcomplex. Contacts the 5S rRNA and the P site tRNA. Forms a bridge to the 30S subunit in the 70S ribosome.

This is one of the proteins that bind and probably mediate the attachment of the 5S RNA into the large ribosomal subunit, where it forms part of the central protuberance. In the 70S ribosome it contacts protein S13 of the 30S subunit (bridge B1b), connecting the 2 subunits; this bridge is implicated in subunit movement. Contacts the P site tRNA; the 5S rRNA and some of its associated proteins might help stabilize positioning of ribosome-bound tRNAs. The protein is Large ribosomal subunit protein uL5 of Porphyromonas gingivalis (strain ATCC 33277 / DSM 20709 / CIP 103683 / JCM 12257 / NCTC 11834 / 2561).